A 1072-amino-acid polypeptide reads, in one-letter code: Carbamoyl phosphate synthase large chain (1072 aa).

The segment at 1 to 401 (MPKRLDINTI…SLLKAVRSLE (401 aa)) is carboxyphosphate synthetic domain. Positions 129, 169, 175, 176, 208, 210, 215, 241, 242, 243, 284, and 298 each coordinate ATP. In terms of domain architecture, ATP-grasp 1 spans 133–327 (RTLMQELNEP…IAKLAAKIAV (195 aa)). 3 residues coordinate Mg(2+): Q284, E298, and N300. Residues Q284, E298, and N300 each coordinate Mn(2+). Residues 402–546 (LGIYHLELDH…YSTYADENEL (145 aa)) are oligomerization domain. The carbamoyl phosphate synthetic domain stretch occupies residues 547–929 (IVTDRKSVVV…ALYKGLVASG (383 aa)). The ATP-grasp 2 domain occupies 671-861 (EAALTKLGIP…MANVATKVIL (191 aa)). Residues R707, R746, E752, G777, V778, H779, S780, Q820, and E832 each contribute to the ATP site. Q820, E832, and N834 together coordinate Mg(2+). Mn(2+)-binding residues include Q820, E832, and N834. One can recognise an MGS-like domain in the interval 930 to 1072 (INIPTHGSVI…QTKRHEVVHA (143 aa)). Residues 930–1072 (INIPTHGSVI…QTKRHEVVHA (143 aa)) form an allosteric domain region.

This sequence belongs to the CarB family. In terms of assembly, composed of two chains; the small (or glutamine) chain promotes the hydrolysis of glutamine to ammonia, which is used by the large (or ammonia) chain to synthesize carbamoyl phosphate. Tetramer of heterodimers (alpha,beta)4. Mg(2+) serves as cofactor. It depends on Mn(2+) as a cofactor.

It carries out the reaction hydrogencarbonate + L-glutamine + 2 ATP + H2O = carbamoyl phosphate + L-glutamate + 2 ADP + phosphate + 2 H(+). The enzyme catalyses hydrogencarbonate + NH4(+) + 2 ATP = carbamoyl phosphate + 2 ADP + phosphate + 2 H(+). It participates in amino-acid biosynthesis; L-arginine biosynthesis; carbamoyl phosphate from bicarbonate: step 1/1. It functions in the pathway pyrimidine metabolism; UMP biosynthesis via de novo pathway; (S)-dihydroorotate from bicarbonate: step 1/3. Functionally, large subunit of the glutamine-dependent carbamoyl phosphate synthetase (CPSase). CPSase catalyzes the formation of carbamoyl phosphate from the ammonia moiety of glutamine, carbonate, and phosphate donated by ATP, constituting the first step of 2 biosynthetic pathways, one leading to arginine and/or urea and the other to pyrimidine nucleotides. The large subunit (synthetase) binds the substrates ammonia (free or transferred from glutamine from the small subunit), hydrogencarbonate and ATP and carries out an ATP-coupled ligase reaction, activating hydrogencarbonate by forming carboxy phosphate which reacts with ammonia to form carbamoyl phosphate. This chain is Carbamoyl phosphate synthase large chain, found in Bacillus anthracis (strain A0248).